Reading from the N-terminus, the 336-residue chain is Tetraacyldisaccharide 4'-kinase (336 aa).

60–67 serves as a coordination point for ATP; the sequence is TIGGTGKT.

This sequence belongs to the LpxK family.

The enzyme catalyses a lipid A disaccharide + ATP = a lipid IVA + ADP + H(+). Its pathway is glycolipid biosynthesis; lipid IV(A) biosynthesis; lipid IV(A) from (3R)-3-hydroxytetradecanoyl-[acyl-carrier-protein] and UDP-N-acetyl-alpha-D-glucosamine: step 6/6. Functionally, transfers the gamma-phosphate of ATP to the 4'-position of a tetraacyldisaccharide 1-phosphate intermediate (termed DS-1-P) to form tetraacyldisaccharide 1,4'-bis-phosphate (lipid IVA). The chain is Tetraacyldisaccharide 4'-kinase from Pseudomonas putida (strain W619).